The sequence spans 349 residues: Protein RecA (349 aa).

Position 65-72 (65-72 (GPESSGKT)) interacts with ATP. The interval 329-349 (FDGDVDENENEDDSPKTLFDE) is disordered. Acidic residues predominate over residues 331 to 340 (GDVDENENED).

It belongs to the RecA family.

Its subcellular location is the cytoplasm. Its function is as follows. Can catalyze the hydrolysis of ATP in the presence of single-stranded DNA, the ATP-dependent uptake of single-stranded DNA by duplex DNA, and the ATP-dependent hybridization of homologous single-stranded DNAs. It interacts with LexA causing its activation and leading to its autocatalytic cleavage. This is Protein RecA from Staphylococcus epidermidis (strain ATCC 35984 / DSM 28319 / BCRC 17069 / CCUG 31568 / BM 3577 / RP62A).